Consider the following 125-residue polypeptide: Large ribosomal subunit protein bL12 (125 aa).

This sequence belongs to the bacterial ribosomal protein bL12 family. Homodimer. Part of the ribosomal stalk of the 50S ribosomal subunit. Forms a multimeric L10(L12)X complex, where L10 forms an elongated spine to which 2 to 4 L12 dimers bind in a sequential fashion. Binds GTP-bound translation factors.

Functionally, forms part of the ribosomal stalk which helps the ribosome interact with GTP-bound translation factors. Is thus essential for accurate translation. The sequence is that of Large ribosomal subunit protein bL12 from Rhizobium johnstonii (strain DSM 114642 / LMG 32736 / 3841) (Rhizobium leguminosarum bv. viciae).